The following is a 126-amino-acid chain: Small ribosomal subunit protein uS13 (126 aa).

Residues 98–126 (PVRGQSTKNNARTRKGRKKTVANKKKATK) are disordered. The span at 108–126 (ARTRKGRKKTVANKKKATK) shows a compositional bias: basic residues.

This sequence belongs to the universal ribosomal protein uS13 family. In terms of assembly, part of the 30S ribosomal subunit. Forms a loose heterodimer with protein S19. Forms two bridges to the 50S subunit in the 70S ribosome.

Located at the top of the head of the 30S subunit, it contacts several helices of the 16S rRNA. In the 70S ribosome it contacts the 23S rRNA (bridge B1a) and protein L5 of the 50S subunit (bridge B1b), connecting the 2 subunits; these bridges are implicated in subunit movement. Contacts the tRNAs in the A and P-sites. This is Small ribosomal subunit protein uS13 from Phocaeicola vulgatus (strain ATCC 8482 / DSM 1447 / JCM 5826 / CCUG 4940 / NBRC 14291 / NCTC 11154) (Bacteroides vulgatus).